The following is a 167-amino-acid chain: Protein-lysine myristoyltransferase RtxC (167 aa).

Residues H20 and D89 contribute to the active site.

Belongs to the RTX toxin acyltransferase family.

The protein resides in the cytoplasm. The enzyme catalyses tetradecanoyl-[ACP] + L-lysyl-[protein] = N(6)-tetradecanoyl-L-lysyl-[protein] + holo-[ACP] + H(+). Functionally, protein-lysine myristoyltransferase that catalyzes myristoylation of the protoxin (RtxA) at two internal lysine residues, thereby converting it to the active toxin. The chain is Protein-lysine myristoyltransferase RtxC from Kingella kingae.